Consider the following 305-residue polypeptide: tRNA-splicing endonuclease (305 aa).

Active-site residues include tyrosine 246, histidine 257, and lysine 287.

The protein belongs to the tRNA-intron endonuclease family. Archaeal long subfamily. As to quaternary structure, homodimer.

It catalyses the reaction pretRNA = a 3'-half-tRNA molecule with a 5'-OH end + a 5'-half-tRNA molecule with a 2',3'-cyclic phosphate end + an intron with a 2',3'-cyclic phosphate and a 5'-hydroxyl terminus.. Functionally, endonuclease that removes tRNA introns. Cleaves pre-tRNA at the 5'- and 3'-splice sites to release the intron. The products are an intron and two tRNA half-molecules bearing 2',3' cyclic phosphate and 5'-OH termini. Recognizes a pseudosymmetric substrate in which 2 bulged loops of 3 bases are separated by a stem of 4 bp. The sequence is that of tRNA-splicing endonuclease from Archaeoglobus fulgidus (strain ATCC 49558 / DSM 4304 / JCM 9628 / NBRC 100126 / VC-16).